The chain runs to 235 residues: tRNA1(Val) (adenine(37)-N6)-methyltransferase (235 aa).

The protein belongs to the methyltransferase superfamily. tRNA (adenine-N(6)-)-methyltransferase family.

The protein resides in the cytoplasm. It catalyses the reaction adenosine(37) in tRNA1(Val) + S-adenosyl-L-methionine = N(6)-methyladenosine(37) in tRNA1(Val) + S-adenosyl-L-homocysteine + H(+). Specifically methylates the adenine in position 37 of tRNA(1)(Val) (anticodon cmo5UAC). This Flavobacterium johnsoniae (strain ATCC 17061 / DSM 2064 / JCM 8514 / BCRC 14874 / CCUG 350202 / NBRC 14942 / NCIMB 11054 / UW101) (Cytophaga johnsonae) protein is tRNA1(Val) (adenine(37)-N6)-methyltransferase.